Reading from the N-terminus, the 381-residue chain is CD2 homolog (381 aa).

The N-terminal stretch at 1-16 is a signal peptide; that stretch reads MIIKLIFLICFKIVLS. Topologically, residues 17 to 208 are extracellular; the sequence is INYWVRYNDT…QNYFLENIHT (192 aa). N-linked (GlcNAc...) asparagine; by host glycans are attached at residues asparagine 24, asparagine 73, asparagine 77, asparagine 85, asparagine 91, asparagine 104, asparagine 121, asparagine 133, asparagine 144, asparagine 176, asparagine 183, and asparagine 189. 2 disulfide bridges follow: cysteine 122–cysteine 190 and cysteine 129–cysteine 173. Residues 209–229 form a helical membrane-spanning segment; it reads LFYMIIFIVSGITISIFISII. Residues 230 to 381 lie on the Cytoplasmic side of the membrane; it reads TFLSLRKRKK…ISLIHVDRII (152 aa). Residues 243 to 278 form a disordered region; that stretch reads EIESPPPESNEEEQCQHDDTTSIHEPSPREPLLPKP. Residues 256 to 270 are compositionally biased toward basic and acidic residues; the sequence is QCQHDDTTSIHEPSP. A run of 7 repeats spans residues 305–310, 311–316, 317–322, 323–328, 329–334, 335–340, and 341–346. Positions 305 to 334 are 7 X 6 AA tandem repeats of K-[LP]-C-[PRS]-[PS]-[PS]; the sequence is KPCPPPKPCPPPKPCPPPKPCPPPKPCPPP. The tract at residues 341–362 is disordered; that stretch reads KPCPPPESYSPPKPLPSIPLLP.

This sequence belongs to the asfivirus CD2 homolog protein family. Both glycosylated and nonglycosylated forms interact (via C-terminus) with the host AP-1 complex. In terms of processing, cleaved into two fragments of 63 kDa and 26 kDa containing respectively the glycosylated N-terminus and the nonglycosylated C-terminus. A full-length 89-kDa glycosylated form also exists.

The protein localises to the host membrane. It localises to the virion membrane. Its subcellular location is the host Golgi apparatus. Its function is as follows. May play an immunosuppressive role by inhibiting lymphocyte proliferation and subsequently facilitating viral replication and generalization of infection. Responsible for viral hemadsorption, which may help viral spread. Increases virus replication in the tick vector at the step of virus uptake or replication in the tick gut. May play a role in the host Golgi reorganization to yield viral factories. May play a role in host cell penetration. The sequence is that of CD2 homolog from African swine fever virus (isolate Warthog/Namibia/Wart80/1980) (ASFV).